The following is a 602-amino-acid chain: Elongation factor 4 (602 aa).

Residues 7 to 188 (ENIRNFSIIA…AIIELIPPPK (182 aa)) form the tr-type G domain. GTP is bound by residues 19–24 (DHGKST) and 135–138 (NKID).

It belongs to the TRAFAC class translation factor GTPase superfamily. Classic translation factor GTPase family. LepA subfamily.

Its subcellular location is the cell inner membrane. It catalyses the reaction GTP + H2O = GDP + phosphate + H(+). Its function is as follows. Required for accurate and efficient protein synthesis under certain stress conditions. May act as a fidelity factor of the translation reaction, by catalyzing a one-codon backward translocation of tRNAs on improperly translocated ribosomes. Back-translocation proceeds from a post-translocation (POST) complex to a pre-translocation (PRE) complex, thus giving elongation factor G a second chance to translocate the tRNAs correctly. Binds to ribosomes in a GTP-dependent manner. In Chlamydia caviae (strain ATCC VR-813 / DSM 19441 / 03DC25 / GPIC) (Chlamydophila caviae), this protein is Elongation factor 4.